Consider the following 338-residue polypeptide: S-adenosylmethionine:tRNA ribosyltransferase-isomerase (338 aa).

This sequence belongs to the QueA family. As to quaternary structure, monomer.

The protein localises to the cytoplasm. The enzyme catalyses 7-aminomethyl-7-carbaguanosine(34) in tRNA + S-adenosyl-L-methionine = epoxyqueuosine(34) in tRNA + adenine + L-methionine + 2 H(+). It functions in the pathway tRNA modification; tRNA-queuosine biosynthesis. Functionally, transfers and isomerizes the ribose moiety from AdoMet to the 7-aminomethyl group of 7-deazaguanine (preQ1-tRNA) to give epoxyqueuosine (oQ-tRNA). The sequence is that of S-adenosylmethionine:tRNA ribosyltransferase-isomerase from Carboxydothermus hydrogenoformans (strain ATCC BAA-161 / DSM 6008 / Z-2901).